The sequence spans 354 residues: Histidinol-phosphate aminotransferase (354 aa).

Lys215 carries the post-translational modification N6-(pyridoxal phosphate)lysine.

Belongs to the class-II pyridoxal-phosphate-dependent aminotransferase family. Histidinol-phosphate aminotransferase subfamily. As to quaternary structure, homodimer. Pyridoxal 5'-phosphate is required as a cofactor.

It catalyses the reaction L-histidinol phosphate + 2-oxoglutarate = 3-(imidazol-4-yl)-2-oxopropyl phosphate + L-glutamate. The protein operates within amino-acid biosynthesis; L-histidine biosynthesis; L-histidine from 5-phospho-alpha-D-ribose 1-diphosphate: step 7/9. The sequence is that of Histidinol-phosphate aminotransferase from Vesicomyosocius okutanii subsp. Calyptogena okutanii (strain HA).